The primary structure comprises 119 residues: Ribonuclease P protein component (119 aa).

It belongs to the RnpA family. In terms of assembly, consists of a catalytic RNA component (M1 or rnpB) and a protein subunit.

The catalysed reaction is Endonucleolytic cleavage of RNA, removing 5'-extranucleotides from tRNA precursor.. Functionally, RNaseP catalyzes the removal of the 5'-leader sequence from pre-tRNA to produce the mature 5'-terminus. It can also cleave other RNA substrates such as 4.5S RNA. The protein component plays an auxiliary but essential role in vivo by binding to the 5'-leader sequence and broadening the substrate specificity of the ribozyme. In Halalkalibacterium halodurans (strain ATCC BAA-125 / DSM 18197 / FERM 7344 / JCM 9153 / C-125) (Bacillus halodurans), this protein is Ribonuclease P protein component.